A 391-amino-acid polypeptide reads, in one-letter code: tRNA (cytosine(38)-C(5))-methyltransferase (391 aa).

The 388-residue stretch at L4–E391 folds into the SAM-dependent MTase C5-type domain. Residues I13–G15, D34, I57–E58, and S76 contribute to the S-adenosyl-L-methionine site. Residue C79 is part of the active site. Residue S376 coordinates S-adenosyl-L-methionine.

The protein belongs to the class I-like SAM-binding methyltransferase superfamily. C5-methyltransferase family.

It is found in the cytoplasm. The catalysed reaction is cytidine(38) in tRNA + S-adenosyl-L-methionine = 5-methylcytidine(38) in tRNA + S-adenosyl-L-homocysteine + H(+). Its function is as follows. Specifically methylates cytosine 38 in the anticodon loop of tRNA(Asp). Has higher activity on tRNA(Asp) modified with queuosine at position 34. This Rattus norvegicus (Rat) protein is tRNA (cytosine(38)-C(5))-methyltransferase (Trdmt1).